We begin with the raw amino-acid sequence, 538 residues long: Nucleobase-ascorbate transporter 7 (538 aa).

The span at Met-1–Val-11 shows a compositional bias: gly residues. Positions Met-1 to Leu-20 are disordered. Transmembrane regions (helical) follow at residues Ala-45–Thr-65, Met-81–Thr-101, Leu-103–Ala-123, Ile-143–Trp-163, Val-166–Leu-186, Phe-191–Phe-211, Phe-229–Gly-249, Phe-295–Val-315, Val-372–Ala-394, Ala-398–Leu-420, Phe-432–Thr-452, and Ile-471–Val-491.

It belongs to the nucleobase:cation symporter-2 (NCS2) (TC 2.A.40) family. Expressed exclusively in ovules.

It localises to the cell membrane. The polypeptide is Nucleobase-ascorbate transporter 7 (NAT7) (Arabidopsis thaliana (Mouse-ear cress)).